Consider the following 261-residue polypeptide: Indole-3-glycerol phosphate synthase (261 aa).

The protein belongs to the TrpC family.

It catalyses the reaction 1-(2-carboxyphenylamino)-1-deoxy-D-ribulose 5-phosphate + H(+) = (1S,2R)-1-C-(indol-3-yl)glycerol 3-phosphate + CO2 + H2O. Its pathway is amino-acid biosynthesis; L-tryptophan biosynthesis; L-tryptophan from chorismate: step 4/5. The chain is Indole-3-glycerol phosphate synthase from Campylobacter curvus (strain 525.92).